We begin with the raw amino-acid sequence, 635 residues long: Glutamine sensor PIB2 (635 aa).

Residues 1-110 are disordered; it reads MTALHSVSKT…GTGFVDRKQQ (110 aa). The segment at 1-164 is may play a role in attenuating TORC1 signaling; the sequence is MTALHSVSKT…KTLPFTDDQR (164 aa). A compositionally biased stretch (basic and acidic residues) spans 33 to 44; that stretch reads RNHDYRGRKGDE. 2 positions are modified to phosphoserine: Ser46 and Ser53. Thr56 bears the Phosphothreonine mark. Residues 67-85 are compositionally biased toward polar residues; it reads STHSEQSILSSISLKSMVN. A phosphoserine mark is found at Ser73, Ser113, Ser124, Ser148, Ser165, and Ser174. Disordered regions lie at residues 123 to 181 and 224 to 254; these read NSAE…VSRG and SSNL…TSKV. Residues 238-254 are compositionally biased toward low complexity; it reads SSSSSTSSVSSSSTSKV. Phosphoserine is present on residues Ser300, Ser309, and Ser381. A required for interaction with TORC1 region spans residues 304 to 440; it reads LPQPASSTNL…PTISNRNSAR (137 aa). Residues 452–527 form an FYVE-type; atypical zinc finger; that stretch reads DSKRNSCRYC…ICDDCLVEYE (76 aa). Residues Cys458, Cys461, Cys474, Cys477, Cys482, His485, Cys519, and Cys522 each contribute to the Zn(2+) site. 2 disordered regions span residues 534–557 and 570–623; these read HNAN…DNRK and ALFR…GSVI. Composition is skewed to acidic residues over residues 543-553 and 601-616; these read INVEEGEDDDN and EEAD…EEGN. Residues 620-635 form a may be required for TORC1 activation region; it reads GSVIGSVPANWNWSSF.

As to quaternary structure, interacts with the TORC1 complex when activated by glutamine or cysteine. Interacts with TOR1; glutamine enhances the interaction. Interacts with KOG1; glutamine enhances the interaction. Interacts with TCO89. Interacts with LST8; glutamine enhances the interaction. Interacts with TOR2; glutamine enhances the interaction.

The protein resides in the vacuole membrane. Its activity is regulated as follows. Activated by glutamine. May also be activated by cysteine. Its function is as follows. Functions as an intracellular glutamine sensor that directly activates the TORC1 signaling pathway, to promote cell growth when glutamine is available. May play a role in repressing NPR1 activity independently of TORC1 signaling. The protein is Glutamine sensor PIB2 of Saccharomyces cerevisiae (strain ATCC 204508 / S288c) (Baker's yeast).